The primary structure comprises 374 residues: F-box/LRR-repeat protein 8 (374 aa).

One can recognise an F-box domain in the interval 2-48 (GELVDNLPEEVLALIFRDLPLRDLAVATRVCRAWAAAAANSTVWSDK).

Directly interacts with SKP1 and CUL1. In terms of tissue distribution, widely expressed during embryogenesis and in adult tissues.

Substrate-recognition component of the SCF (SKP1-CUL1-F-box protein)-type E3 ubiquitin ligase complex. This is F-box/LRR-repeat protein 8 (Fbxl8) from Mus musculus (Mouse).